The sequence spans 176 residues: uncharacterized protein (176 aa).

Positions 1–12 (MRLPYSSSKPIP) are enriched in polar residues. 2 disordered regions span residues 1-88 (MRLP…PQQQ) and 109-132 (VNNSPIKTPSKKHRSSSKKSPSSS). Residues 13-24 (TNNNNNNNNTNN) show a composition bias toward low complexity. Positions 37–46 (SYYQTQENNK) are enriched in polar residues. Positions 47–88 (PQQSQQHPLLQHQQQQQQQQQQQQQQQQQQQQQQQQQQPQQQ) are enriched in low complexity.

This is an uncharacterized protein from Dictyostelium discoideum (Social amoeba).